The sequence spans 466 residues: Putative transcription factor bHLH041 (466 aa).

3 disordered regions span residues 108 to 129 (PANS…SLSP), 194 to 213 (LTGP…KGRA), and 260 to 289 (RENA…TQLQ). The segment covering 120 to 129 (PSSSSSSLSP) has biased composition (low complexity). Over residues 268-279 (EGSGGSGGGGRY) the composition is skewed to gly residues. One can recognise a bHLH domain in the interval 285–334 (ATQLQHMISERKRREKLNESFQALRSLLPPGTKKDKASVLSIAREQLSSL).

As to quaternary structure, homodimer.

It is found in the nucleus. This chain is Putative transcription factor bHLH041 (BHLH41), found in Arabidopsis thaliana (Mouse-ear cress).